The following is a 155-amino-acid chain: Ribosomal RNA large subunit methyltransferase H (155 aa).

S-adenosyl-L-methionine is bound by residues Leu72, Gly103, and 122-127; that span reads LSPLTL.

Belongs to the RNA methyltransferase RlmH family. In terms of assembly, homodimer.

It localises to the cytoplasm. It carries out the reaction pseudouridine(1915) in 23S rRNA + S-adenosyl-L-methionine = N(3)-methylpseudouridine(1915) in 23S rRNA + S-adenosyl-L-homocysteine + H(+). Functionally, specifically methylates the pseudouridine at position 1915 (m3Psi1915) in 23S rRNA. The polypeptide is Ribosomal RNA large subunit methyltransferase H (Histophilus somni (strain 2336) (Haemophilus somnus)).